Here is a 150-residue protein sequence, read N- to C-terminus: Large ribosomal subunit protein bL9 (150 aa).

The protein belongs to the bacterial ribosomal protein bL9 family.

Functionally, binds to the 23S rRNA. The polypeptide is Large ribosomal subunit protein bL9 (Burkholderia ambifaria (strain MC40-6)).